Consider the following 416-residue polypeptide: Gap junction alpha-3 protein (416 aa).

Residues 2–15 (GDWSFLGRLLENAQ) lie within the membrane without spanning it. The Cytoplasmic segment spans residues 16–19 (EHST). Residues 20–40 (VIGKVWLTVLFIFRILVLGAA) traverse the membrane as a helical segment. The Extracellular segment spans residues 41–71 (AEEVWGDEQSDFTCNTQQPGCENVCYDRAFP). Disulfide bonds link cysteine 54–cysteine 198, cysteine 61–cysteine 192, and cysteine 65–cysteine 187. A helical transmembrane segment spans residues 72 to 92 (ISHIRFWALQIIFVSTPTLIY). The Cytoplasmic portion of the chain corresponds to 93-158 (LGHVLHIVRM…GALLRTYVFN (66 aa)). The segment covering 110 to 128 (EEELLRRDNPQHGRGREPM) has biased composition (basic and acidic residues). The tract at residues 110-141 (EEELLRRDNPQHGRGREPMRTGSPRDPPLRDD) is disordered. Residues 159–179 (IIFKTLFEVGFIAGQYFLYGF) form a helical membrane-spanning segment. Residues 180–207 (QLQPLYRCDRWPCPNTVDCFISRPTEKT) are Extracellular-facing. The chain crosses the membrane as a helical span at residues 208–228 (IFVIFMLAVACASLVLNMLEI). Residues 229–416 (YHLGWKKLKQ…GRARPGDLAI (188 aa)) are Cytoplasmic-facing. Residues 336 to 416 (GAEPQTPASK…GRARPGDLAI (81 aa)) form a disordered region. Positions 342 to 353 (PASKPSSAASSP) are enriched in low complexity.

The protein belongs to the connexin family. Alpha-type (group II) subfamily. As to quaternary structure, a hemichannel or connexon is composed of a hexamer of connexins. A functional gap junction is formed by the apposition of two hemichannels. Forms heteromeric channels with GJA8. As to expression, detected in eye lens (at protein level). Most abundant in lens, but also present in heart and kidney.

The protein localises to the cell membrane. The protein resides in the cell junction. It localises to the gap junction. In terms of biological role, structural component of lens fiber gap junctions. Gap junctions are dodecameric channels that connect the cytoplasm of adjoining cells. They are formed by the docking of two hexameric hemichannels, one from each cell membrane. Small molecules and ions diffuse from one cell to a neighboring cell via the central pore. The chain is Gap junction alpha-3 protein (Gja3) from Rattus norvegicus (Rat).